The primary structure comprises 351 residues: Calcium uniporter protein, mitochondrial (351 aa).

Residues 1–50 (MAAAAGRSLLLLLSSRGGGGGGAGGCGALTAGCFPGLGVSRHRQQQHHRT) constitute a mitochondrion transit peptide. Topologically, residues 51–233 (VHQRIASWQN…ISRKAEKRTT (183 aa)) are mitochondrial matrix. Phosphoserine; by CaMK2 occurs at positions 57 and 92. Positions 75 to 165 (VTVVYQNGLP…LTYHVRPPKR (91 aa)) are N-terminal MCU domain. The residue at position 97 (C97) is an S-glutathionyl cysteine. A coiled-coil region spans residues 192–223 (IEQHQLNKERELIERLEDLKEQLAPLEKVRIE). The helical transmembrane segment at 234–255 (LVLWGGLAYMATQFGILARLTW) threads the bilayer. At 256–262 (WEYSWDI) the chain is on the mitochondrial intermembrane side. The Selectivity filter motif lies at 260-268 (WDIMEPVTY). The helical transmembrane segment at 263 to 284 (MEPVTYFITYGSAMAMYAYFVM) threads the bilayer. E264 serves as a coordination point for Ca(2+). The tract at residues 285-290 (TRQEYV) is juxtamembrane helix. The Mitochondrial matrix portion of the chain corresponds to 285 to 351 (TRQEYVYPEA…LPLRQIGEKD (67 aa)). A coiled-coil region spans residues 311–339 (RFDLEKYNQLKDAIAQAEMDLKRLRDPLQ). K332 carries the N6-acetyllysine modification.

The protein belongs to the MCU (TC 1.A.77) family. In terms of assembly, homotetramer. Component of the uniplex complex, composed of MCU, EMRE/SMDT1, MICU1 and MICU2 (or MICU3) in a 4:4:1:1 stoichiometry. Interacts with CCDC109B/MCUB; this inhibits channel activity. Interacts with MCUR1. Interactions with MICU1 and MCUR1 are mutually exclusive. Interacts with SLC25A23. Phosphorylation by CaMK2 in heart leads to increased MCU current. The regulation of MCU by CaMK2 is however subject to discussion: another group was unable to reproduce these results. Phosphorylated on tyrosines by PTK2B/PYK2, promoting oligomerization. Post-translationally, glutathionylation at Cys-97 in response to reactive oxygen species (ROS) promotes MCU higher-order assembly, leading to constitutive activation of the MCU channel and mitochondrial calcium overload. In terms of processing, undergoes proteolytic degradation by SPG7.

It is found in the mitochondrion inner membrane. The enzyme catalyses Ca(2+)(in) = Ca(2+)(out). With respect to regulation, MCU channel activity is regulated by the heterodimer composed of MICU1 and either MICU2 or MICU3, which act as calcium-sensors. At low calcium levels, MICU1 occludes the pore of the MCU channel, preventing mitochondrial calcium uptake. At higher calcium levels, calcium-binding to MICU1 and MICU2 (or MICU3) induces a conformational change that weakens MCU-MICU1 interactions and moves the MICU1-MICU2 heterodimer away from the pore, allowing calcium permeation through the channel. MCU channel activity is gated by EMRE/SMDT1 via the juxtamembrane helix loop. Inhibited by ruthenium red or its derivative Ru360. Functionally, channel-forming and calcium-conducting subunit of the mitochondrial inner membrane calcium uniporter complex (uniplex), which mediates calcium uptake into the mitochondrial matrix. MCU channel activity is regulated by the calcium-sensor subunits of the uniplex MICU1 and MICU2 (or MICU3). Mitochondrial calcium homeostasis plays key roles in cellular physiology and regulates ATP production, cytoplasmic calcium signals and activation of cell death pathways. Involved in buffering the amplitude of systolic calcium rises in cardiomyocytes. While dispensable for baseline homeostatic cardiac function, acts as a key regulator of short-term mitochondrial calcium loading underlying a 'fight-or-flight' response during acute stress: acts by mediating a rapid increase of mitochondrial calcium in pacemaker cells. Participates in mitochondrial permeability transition during ischemia-reperfusion injury. Mitochondrial calcium uptake in skeletal muscle cells is involved in muscle size in adults. Regulates synaptic vesicle endocytosis kinetics in central nerve terminal. Regulates glucose-dependent insulin secretion in pancreatic beta-cells by regulating mitochondrial calcium uptake. Involved in antigen processing and presentation. This Homo sapiens (Human) protein is Calcium uniporter protein, mitochondrial.